A 744-amino-acid polypeptide reads, in one-letter code: Deleted in azoospermia protein 1 (744 aa).

The span at 1–10 (MSAANPETPN) shows a compositional bias: polar residues. Residues 1–27 (MSAANPETPNSTISREASTQSSSAAAS) form a disordered region. Positions 11 to 27 (STISREASTQSSSAAAS) are enriched in low complexity. The RRM 1 domain maps to 40–115 (NTVFVGGIDA…KKLKLGPAIR (76 aa)). Residues 163–175 (QHVQSAANPETPN) show a composition bias toward polar residues. Residues 163–192 (QHVQSAANPETPNSTISREASTQSSSAAAS) are disordered. Over residues 176-192 (STISREASTQSSSAAAS) the composition is skewed to low complexity. Residues 205–280 (NTVFVGGIDA…KKLKLGPAIR (76 aa)) enclose the RRM 2 domain. The span at 328–340 (QHVQSAANPETPN) shows a compositional bias: polar residues. The interval 328–357 (QHVQSAANPETPNSTISREASTQSSSAAAS) is disordered. The span at 341–357 (STISREASTQSSSAAAS) shows a compositional bias: low complexity. In terms of domain architecture, RRM 3 spans 370 to 445 (NTVFVGGIDA…KKLKLGPAIR (76 aa)). 9 DAZ domains span residues 497–520 (AYSA…YNYQ), 521–544 (EYPT…YNYQ), 545–568 (PFPA…YNYQ), 569–592 (AFPA…YNYQ), 593–616 (PFPA…YNYQ), 617–640 (AFPA…YNYQ), 641–664 (AFPA…YNYQ), 665–688 (AFPA…YNYQ), and 689–712 (AFPA…YNYQ).

This sequence belongs to the RRM DAZ family. Forms a heterodimer with BOLL and DAZL. Interacts with PUM2, DAZAP1, DAZAP2, DZIP1 and DZIP3. In terms of tissue distribution, testis-specific. Expression restricted to premeiotic germ cells, particularly in spermatogonia (at protein level).

The protein localises to the cytoplasm. Its subcellular location is the nucleus. In terms of biological role, RNA-binding protein that plays an essential role in spermatogenesis. May act by binding to the 3'-UTR of mRNAs and regulating their translation. Promotes germ-cell progression to meiosis and formation of haploid germ cells. This is Deleted in azoospermia protein 1 (DAZ1) from Homo sapiens (Human).